A 340-amino-acid polypeptide reads, in one-letter code: Flap endonuclease 1 (340 aa).

The segment at 1–98 (MGVPIGEIIP…KELEKRREAR (98 aa)) is N-domain. Asp-27, Asp-80, Glu-152, Glu-154, Asp-173, Asp-175, and Asp-236 together coordinate Mg(2+). Positions 116–258 (EARKYAQRAT…KALEIVRHSK (143 aa)) are I-domain. Residues 330-338 (KQSTLESWF) are interaction with PCNA.

This sequence belongs to the XPG/RAD2 endonuclease family. FEN1 subfamily. As to quaternary structure, interacts with PCNA. PCNA stimulates the nuclease activity without altering cleavage specificity. Mg(2+) is required as a cofactor.

Functionally, structure-specific nuclease with 5'-flap endonuclease and 5'-3' exonuclease activities involved in DNA replication and repair. During DNA replication, cleaves the 5'-overhanging flap structure that is generated by displacement synthesis when DNA polymerase encounters the 5'-end of a downstream Okazaki fragment. Binds the unpaired 3'-DNA end and kinks the DNA to facilitate 5' cleavage specificity. Cleaves one nucleotide into the double-stranded DNA from the junction in flap DNA, leaving a nick for ligation. Also involved in the base excision repair (BER) pathway. Acts as a genome stabilization factor that prevents flaps from equilibrating into structures that lead to duplications and deletions. Also possesses 5'-3' exonuclease activity on nicked or gapped double-stranded DNA. The polypeptide is Flap endonuclease 1 (Pyrococcus furiosus (strain ATCC 43587 / DSM 3638 / JCM 8422 / Vc1)).